Reading from the N-terminus, the 1168-residue chain is Transcription-repair-coupling factor (1168 aa).

One can recognise a Helicase ATP-binding domain in the interval 633 to 794; it reads DMQKSRPMDR…MLGVRDLSVI (162 aa). 646 to 653 contributes to the ATP binding site; it reads GDVGYGKT. Residues 747–750 carry the DEEQ box motif; the sequence is DEEQ. A Helicase C-terminal domain is found at 808–969; it reads VLEQNMSFIK…GFKIAMRDLN (162 aa).

It in the N-terminal section; belongs to the UvrB family. The protein in the C-terminal section; belongs to the helicase family. RecG subfamily.

It is found in the cytoplasm. In terms of biological role, couples transcription and DNA repair by recognizing RNA polymerase (RNAP) stalled at DNA lesions. Mediates ATP-dependent release of RNAP and its truncated transcript from the DNA, and recruitment of nucleotide excision repair machinery to the damaged site. The sequence is that of Transcription-repair-coupling factor from Staphylococcus aureus (strain USA300).